A 55-amino-acid chain; its full sequence is Large ribosomal subunit protein bL33 (55 aa).

The protein belongs to the bacterial ribosomal protein bL33 family.

The protein is Large ribosomal subunit protein bL33 of Rhodopseudomonas palustris (strain HaA2).